The chain runs to 272 residues: Bis(5'-nucleosyl)-tetraphosphatase, symmetrical (272 aa).

Belongs to the Ap4A hydrolase family.

The catalysed reaction is P(1),P(4)-bis(5'-adenosyl) tetraphosphate + H2O = 2 ADP + 2 H(+). Hydrolyzes diadenosine 5',5'''-P1,P4-tetraphosphate to yield ADP. In Chromohalobacter salexigens (strain ATCC BAA-138 / DSM 3043 / CIP 106854 / NCIMB 13768 / 1H11), this protein is Bis(5'-nucleosyl)-tetraphosphatase, symmetrical.